The following is a 308-amino-acid chain: MQEIESLHQSVLLQEVLQAFAPLEEGVLIDCTLGLGGHSKAILSQKPHLKLIGIDKDKFAQEIAKERLKAFEGRYNLLSGGFAKRFKEALEMHDKEIKGVLVDLGVSSLQLDDDSRGFNFHSHALDMRMDLESDLNAQKVINSYPVVALEKIFKDYGEIKEYKKIAHKIAERRAKKPFKDAKDLSDFLSSLSKNKKIHPATLVFQAVRIEVNSELEELKEFLQCARNLKEAILCVISFHSLEDALVKNAFKDYAKNCICDPSSFKCTCSNNHALGEILTKKPITPSPEEIKNNRRSRSAKMRVFQFKP.

Residues 36 to 38, D55, F86, D103, and Q110 each bind S-adenosyl-L-methionine; that span reads GGH.

It belongs to the methyltransferase superfamily. RsmH family.

The protein localises to the cytoplasm. The enzyme catalyses cytidine(1402) in 16S rRNA + S-adenosyl-L-methionine = N(4)-methylcytidine(1402) in 16S rRNA + S-adenosyl-L-homocysteine + H(+). In terms of biological role, specifically methylates the N4 position of cytidine in position 1402 (C1402) of 16S rRNA. The polypeptide is Ribosomal RNA small subunit methyltransferase H (Helicobacter pylori (strain Shi470)).